A 56-amino-acid chain; its full sequence is ComX pheromone (56 aa).

Positions 1 to 50 (MMQDLINYFLSYPEVLKKLKNREACLIGFSSNETETIIKAYNDYHLSSPT) are excised as a propeptide. Position 54 is a tryptophan derivative (Trp-54). Trp-54 carries the 3'-farnesyl-2',N2-cyclotryptophan lipid modification.

Interacts directly with the sensor histidine kinase ComP and stimulates its activity. Trp-54 is modified by farnesylation, which is essential for activity. Modified by the tryptophan prenyltransferase ComQ before export to the extracellular environment. The type of isoprenyl derivative differs among the different pherotypes and depends on ComX primary sequence.

The protein resides in the secreted. Functionally, part of a major quorum-sensing system that regulates the development of genetic competence. Acts through the activation of the two-component regulatory system ComP/ComA composed of a sensor histidine kinase, ComP, and a response regulator, ComA. In Bacillus mojavensis, this protein is ComX pheromone.